The sequence spans 317 residues: Beta-ketoacyl-[acyl-carrier-protein] synthase III (317 aa).

Residues Cys-112 and His-244 contribute to the active site. The tract at residues 245 to 249 (QANIR) is ACP-binding. Residue Asn-274 is part of the active site.

This sequence belongs to the thiolase-like superfamily. FabH family. Homodimer.

The protein localises to the cytoplasm. The enzyme catalyses malonyl-[ACP] + acetyl-CoA + H(+) = 3-oxobutanoyl-[ACP] + CO2 + CoA. It participates in lipid metabolism; fatty acid biosynthesis. Functionally, catalyzes the condensation reaction of fatty acid synthesis by the addition to an acyl acceptor of two carbons from malonyl-ACP. Catalyzes the first condensation reaction which initiates fatty acid synthesis and may therefore play a role in governing the total rate of fatty acid production. Possesses both acetoacetyl-ACP synthase and acetyl transacylase activities. Its substrate specificity determines the biosynthesis of branched-chain and/or straight-chain of fatty acids. The polypeptide is Beta-ketoacyl-[acyl-carrier-protein] synthase III (Rickettsia felis (strain ATCC VR-1525 / URRWXCal2) (Rickettsia azadi)).